A 493-amino-acid polypeptide reads, in one-letter code: Probable malate:quinone oxidoreductase (493 aa).

This sequence belongs to the MQO family. The cofactor is FAD.

It catalyses the reaction (S)-malate + a quinone = a quinol + oxaloacetate. It participates in carbohydrate metabolism; tricarboxylic acid cycle; oxaloacetate from (S)-malate (quinone route): step 1/1. This is Probable malate:quinone oxidoreductase from Lysinibacillus sphaericus (strain C3-41).